Consider the following 180-residue polypeptide: UPF0149 protein XCV3523 (180 aa).

It belongs to the UPF0149 family.

The sequence is that of UPF0149 protein XCV3523 from Xanthomonas euvesicatoria pv. vesicatoria (strain 85-10) (Xanthomonas campestris pv. vesicatoria).